A 297-amino-acid chain; its full sequence is Protoheme IX farnesyltransferase 1 (297 aa).

9 consecutive transmembrane segments (helical) span residues 23 to 43, 45 to 65, 93 to 113, 117 to 137, 145 to 165, 171 to 191, 216 to 236, 241 to 261, and 277 to 297; these read VVVL…RAGV, WSVL…AAVV, LPAL…LLVF, LTAW…TGFL, IVIG…AVSG, PLLL…ALAI, LHIL…YAIH, LYLV…WVLY, and IGYL…LLNL.

Belongs to the UbiA prenyltransferase family. Protoheme IX farnesyltransferase subfamily.

It localises to the cell inner membrane. It catalyses the reaction heme b + (2E,6E)-farnesyl diphosphate + H2O = Fe(II)-heme o + diphosphate. The protein operates within porphyrin-containing compound metabolism; heme O biosynthesis; heme O from protoheme: step 1/1. Converts heme B (protoheme IX) to heme O by substitution of the vinyl group on carbon 2 of heme B porphyrin ring with a hydroxyethyl farnesyl side group. This is Protoheme IX farnesyltransferase 1 from Pseudomonas putida (strain ATCC 47054 / DSM 6125 / CFBP 8728 / NCIMB 11950 / KT2440).